Reading from the N-terminus, the 64-residue chain is uncharacterized protein (64 aa).

This is an uncharacterized protein from Escherichia coli O157:H7.